Reading from the N-terminus, the 102-residue chain is Phosphoribosyl-ATP pyrophosphatase (102 aa).

Belongs to the PRA-PH family.

The protein resides in the cytoplasm. The catalysed reaction is 1-(5-phospho-beta-D-ribosyl)-ATP + H2O = 1-(5-phospho-beta-D-ribosyl)-5'-AMP + diphosphate + H(+). It functions in the pathway amino-acid biosynthesis; L-histidine biosynthesis; L-histidine from 5-phospho-alpha-D-ribose 1-diphosphate: step 2/9. The sequence is that of Phosphoribosyl-ATP pyrophosphatase from Ignicoccus hospitalis (strain KIN4/I / DSM 18386 / JCM 14125).